The chain runs to 285 residues: NAD kinase (285 aa).

Asp-68 functions as the Proton acceptor in the catalytic mechanism. NAD(+)-binding positions include 68 to 69 (DG), 142 to 143 (ND), Arg-153, Lys-170, Asp-172, 183 to 188 (TAYNLS), and Gln-242.

This sequence belongs to the NAD kinase family. A divalent metal cation is required as a cofactor.

It is found in the cytoplasm. It catalyses the reaction NAD(+) + ATP = ADP + NADP(+) + H(+). Functionally, involved in the regulation of the intracellular balance of NAD and NADP, and is a key enzyme in the biosynthesis of NADP. Catalyzes specifically the phosphorylation on 2'-hydroxyl of the adenosine moiety of NAD to yield NADP. The chain is NAD kinase from Syntrophotalea carbinolica (strain DSM 2380 / NBRC 103641 / GraBd1) (Pelobacter carbinolicus).